Here is a 334-residue protein sequence, read N- to C-terminus: Heat-inducible transcription repressor HrcA (334 aa).

This sequence belongs to the HrcA family.

Functionally, negative regulator of class I heat shock genes (grpE-dnaK-dnaJ and groELS operons). Prevents heat-shock induction of these operons. This is Heat-inducible transcription repressor HrcA from Verminephrobacter eiseniae (strain EF01-2).